A 318-amino-acid chain; its full sequence is Elongator complex protein 5 (318 aa).

Position 270 is a phosphoserine (Ser270).

It belongs to the ELP5 family. Component of the elongator complex which consists of ELP1, ELP2, ELP3, ELP4, ELP5 and ELP6; in the complex, is required for optimal binding of ELP3 to ELP4. Tyrosine-phosphorylated.

It is found in the nucleus. It localises to the cytoplasm. It functions in the pathway tRNA modification; 5-methoxycarbonylmethyl-2-thiouridine-tRNA biosynthesis. Functionally, component of the elongator complex which is required for multiple tRNA modifications, including mcm5U (5-methoxycarbonylmethyl uridine), mcm5s2U (5-methoxycarbonylmethyl-2-thiouridine), and ncm5U (5-carbamoylmethyl uridine). The elongator complex catalyzes the formation of carboxymethyluridine in the wobble base at position 34 in tRNAs. Involved in cell migration. The chain is Elongator complex protein 5 (Elp5) from Rattus norvegicus (Rat).